A 2479-amino-acid chain; its full sequence is Centrosomal protein of 290 kDa (2479 aa).

The segment at 1–695 is self-association (with itself or C-terminus); the sequence is MPPNINWKEI…IESKNAEGIF (695 aa). Coiled coils occupy residues 59 to 565, 598 to 664, 697 to 931, 958 to 1027, 1071 to 1498, 1533 to 1584, and 1635 to 2452; these read MKMK…ERGK, SLKN…MQKD, ASLH…VCEK, SLSE…IEQA, QRAE…ILSR, HTLK…LHIL, and DSLS…SEQL. Basic and acidic residues predominate over residues 149–163; sequence ALRNEEAENENSKLR. The disordered stretch occupies residues 149-168; it reads ALRNEEAENENSKLRRENKR. Residues 696–896 are interaction with IQCB1; that stretch reads DASLHLKAQV…TVLQVNEKSL (201 aa). The self-association (with itself or N-terminus) stretch occupies residues 1966 to 2479; the sequence is TTGMTVDQVL…EESPVNFPIY (514 aa). The segment at 2458–2479 is disordered; it reads SPVAASEEFEDEEESPVNFPIY.

Part of the tectonic-like complex (also named B9 complex). Interacts with ATF4 via its N-terminal region. Associates with the BBSome complex, interacting (via N-terminus) with BBS4. Interacts with IQCB1/NPHP5; IQCB1 and CEP290/NPHP6 are proposed to form a functional NPHP5-6 module localized to the centrosome. Interacts with NPHP4; the interaction likely requires additional interactors. Interacts with ZNF423, FAM161A, CEP162, CEP162, CEP131, TALPID3, CCDC13, CC2D2A, RPGRIP1. Can self-associate (homo- or heteromeric). Interacts with CCP110; required for suppressing cilia formation. Interacts with RPGR. Associates (via C-terminus) with microtubules; association to microtubule is reduced in response to cellular stress, such as ultraviolet light (UV) radiation or heat shock, in a process that requires p38 MAP kinase signaling. Interacts with FAM161A. Interacts with PCM1. Interacts with CCDC66. Interacts with ARMC9 and CSPP1. Post-translationally, ubiquitinated. May undergo monoubiquitination; monoubiquitination is inhibited in response to cellular stress, such as ultraviolet light (UV) radiation or heat shock, but does not cause its displacement from centriolar satellites. In terms of tissue distribution, ubiquitous. Expressed strongly in placenta and weakly in brain.

Its subcellular location is the cytoplasm. It localises to the cytoskeleton. The protein resides in the microtubule organizing center. It is found in the centrosome. The protein localises to the centriolar satellite. Its subcellular location is the nucleus. It localises to the cell projection. The protein resides in the cilium. It is found in the cilium basal body. The protein localises to the centriole. Its subcellular location is the cytoplasmic vesicle. Its function is as follows. Involved in early and late steps in cilia formation. Its association with CCP110 is required for inhibition of primary cilia formation by CCP110. May play a role in early ciliogenesis in the disappearance of centriolar satellites and in the transition of primary ciliar vesicles (PCVs) to capped ciliary vesicles (CCVs). Required for the centrosomal recruitment of RAB8A and for the targeting of centriole satellite proteins to centrosomes such as of PCM1. Required for the correct localization of ciliary and phototransduction proteins in retinal photoreceptor cells; may play a role in ciliary transport processes. Required for efficient recruitment of RAB8A to primary cilium. In the ciliary transition zone is part of the tectonic-like complex which is required for tissue-specific ciliogenesis and may regulate ciliary membrane composition. Involved in regulation of the BBSome complex integrity, specifically for presence of BBS2, BBS5 and BBS8/TTC8 in the complex, and in ciliary targeting of selected BBSome cargos. May play a role in controlling entry of the BBSome complex to cilia possibly implicating IQCB1/NPHP5. Activates ATF4-mediated transcription. In Homo sapiens (Human), this protein is Centrosomal protein of 290 kDa (CEP290).